The chain runs to 267 residues: Small ribosomal subunit protein uS2 (267 aa).

Residues 233 to 250 (RAESDKAETDKVEVEGKG) show a composition bias toward basic and acidic residues. A disordered region spans residues 233 to 267 (RAESDKAETDKVEVEGKGEAPAAEAAEVVESADKA). Low complexity predominate over residues 251 to 261 (EAPAAEAAEVV).

Belongs to the universal ribosomal protein uS2 family.

The protein is Small ribosomal subunit protein uS2 of Syntrophotalea carbinolica (strain DSM 2380 / NBRC 103641 / GraBd1) (Pelobacter carbinolicus).